The sequence spans 1490 residues: Leucine-rich repeat-containing protein 7 (1490 aa).

LRR repeat units follow at residues 23 to 44 (IISVLDYSHCSLQQVPKEVFNF), 47 to 68 (TLEELYLDANQIEELPKQLFNC), 70 to 91 (ALRKLSIPDNDLSSLPTSIASL), 93 to 114 (NLKELDISKNGVQEFPENIKCC), 116 to 137 (CLTIIEASVNPISKLPDGFTQL), 139 to 161 (NLTQLYLNDAFLEFLPANFGRLV), 162 to 183 (KLRILELRENHLKTLPKSMHKL), 185 to 206 (QLERLDLGNNEFSELPEVLDQI), 208 to 229 (NLRELWMDNNALQVLPGSIGKL), 231 to 253 (MLVYLDMSKNRIETVDMDISGCE), 254 to 275 (ALEDLLLSSNMLQQLPDSIGLL), 277 to 298 (KLTTLKVDDNQLTMLPNTIGNL), 300 to 321 (LLEEFDCSCNELESLPPTIGYL), 323 to 344 (SLRTLAVDENFLPELPREIGSC), 346 to 367 (NVTVMSLRSNKLEFLPEEIGQM), 369 to 391 (RLRVLNLSDNRLKNLPFSFTKLK), and 392 to 413 (ELAALWLSDNQSKALIPLQTEA). Phosphoserine is present on residues S439, S441, and S443. Basic and acidic residues predominate over residues 663–676 (KKESTDESEVDKTH). Disordered stretches follow at residues 663–704 (KKES…NTRM), 785–807 (AGENANNNPLLSSKARSVPAHGR), and 822–899 (ELEQ…YHDP). Over residues 677–686 (CLNNSVSSGT) the composition is skewed to polar residues. Low complexity predominate over residues 687-700 (YSDYSPSQASSASS). T831 is subject to Phosphothreonine. S850 bears the Phosphoserine mark. The span at 859–871 (PSKLETTPTTSPL) shows a compositional bias: low complexity. T865 is modified (phosphothreonine). At S869 the chain carries Phosphoserine. The span at 872-882 (PERKDHMKEPT) shows a compositional bias: basic and acidic residues. S947, S949, and S1118 each carry phosphoserine. A compositionally biased stretch (basic and acidic residues) spans 1134 to 1144 (PHELPPGDRYG). Disordered regions lie at residues 1134–1158 (PHELPPGDRYGRATYRGGLEGQSSI) and 1196–1218 (QRRPLSARSYSTESYGASQTRPV). The residue at position 1149 (R1149) is an Omega-N-methylarginine. Residues 1196-1217 (QRRPLSARSYSTESYGASQTRP) show a composition bias toward polar residues. A Phosphoserine modification is found at S1233. Disordered stretches follow at residues 1238–1265 (GNYGDKTSDNSDIKTRPTPVKGEESCGK) and 1282–1312 (RLDRTPSQQSNILDNGQEDVSPSGQWNPYPL). The segment covering 1243-1263 (KTSDNSDIKTRPTPVKGEESC) has biased composition (basic and acidic residues). Polar residues predominate over residues 1286–1307 (TPSQQSNILDNGQEDVSPSGQW). Phosphoserine occurs at positions 1288 and 1392. Positions 1398–1488 (EQFCVRIEKN…TVDLVIQREL (91 aa)) constitute a PDZ domain.

This sequence belongs to the LAP (LRR and PDZ) protein family. In terms of assembly, interacts with CNKSR2 and DLG4. Interacts with CTNND2/Catenin delta-2. Forms a complex with N-cadherin through CTNND2. Interacts with CAMK2A. Expressed in brain (at protein level).

The protein resides in the cytoplasm. The protein localises to the postsynaptic density. Functionally, required for normal synaptic spine architecture and function. Necessary for DISC1 and GRM5 localization to postsynaptic density complexes and for both N-methyl D-aspartate receptor-dependent and metabotropic glutamate receptor-dependent long term depression. This Mus musculus (Mouse) protein is Leucine-rich repeat-containing protein 7 (Lrrc7).